The following is a 379-amino-acid chain: Queuine tRNA-ribosyltransferase (379 aa).

Catalysis depends on D94, which acts as the Proton acceptor. Substrate is bound by residues D94–F98, D148, Q191, and G218. An RNA binding region spans residues G249–A255. The active-site Nucleophile is D268. Residues T273–R277 are RNA binding; important for wobble base 34 recognition. Residues C306, C308, C311, and H337 each coordinate Zn(2+).

Belongs to the queuine tRNA-ribosyltransferase family. Homodimer. Within each dimer, one monomer is responsible for RNA recognition and catalysis, while the other monomer binds to the replacement base PreQ1. Requires Zn(2+) as cofactor.

It catalyses the reaction 7-aminomethyl-7-carbaguanine + guanosine(34) in tRNA = 7-aminomethyl-7-carbaguanosine(34) in tRNA + guanine. It functions in the pathway tRNA modification; tRNA-queuosine biosynthesis. Functionally, catalyzes the base-exchange of a guanine (G) residue with the queuine precursor 7-aminomethyl-7-deazaguanine (PreQ1) at position 34 (anticodon wobble position) in tRNAs with GU(N) anticodons (tRNA-Asp, -Asn, -His and -Tyr). Catalysis occurs through a double-displacement mechanism. The nucleophile active site attacks the C1' of nucleotide 34 to detach the guanine base from the RNA, forming a covalent enzyme-RNA intermediate. The proton acceptor active site deprotonates the incoming PreQ1, allowing a nucleophilic attack on the C1' of the ribose to form the product. After dissociation, two additional enzymatic reactions on the tRNA convert PreQ1 to queuine (Q), resulting in the hypermodified nucleoside queuosine (7-(((4,5-cis-dihydroxy-2-cyclopenten-1-yl)amino)methyl)-7-deazaguanosine). This Staphylococcus epidermidis (strain ATCC 35984 / DSM 28319 / BCRC 17069 / CCUG 31568 / BM 3577 / RP62A) protein is Queuine tRNA-ribosyltransferase.